We begin with the raw amino-acid sequence, 313 residues long: MEYQDYYKILGVSRDATADEIKKSYRKLARKYHPDVSSEPNAEEKFKQVKEAYEVLKDVEKRKAYDAIGSGWKQGQGFTPPPGWESRPGGEGVRPEFREGFSDFFESLFGGLGQEARWTRQEFKQRGQDQHSRVTVSLEEAFNGSTRLLTLQEPIVDYQTGQVTSKTRQLRIKIPAGVTEGQQIRLQGQGLPGIGGAPNGDLYLEIHLAPHSLFTVEGKDVYLNLPVTPWEAALGAKVSIPTLGGSVDLTLPPGSQTGQKLRLKGRGLPGGTPGDQYVLIKIYIPEPKNDQQKELYQQMAEQMPFDPRKELLG.

Residues 5–69 enclose the J domain; sequence DYYKILGVSR…EKRKAYDAIG (65 aa). Residues 71–93 are disordered; the sequence is GWKQGQGFTPPPGWESRPGGEGV.

The protein localises to the cytoplasm. It localises to the nucleoid. Functionally, DNA-binding protein that preferentially recognizes a curved DNA sequence. It is probably a functional analog of DnaJ; displays overlapping activities with DnaJ, but functions under different conditions, probably acting as a molecular chaperone in an adaptive response to environmental stresses other than heat shock. Lacks autonomous chaperone activity; binds native substrates and targets them for recognition by DnaK. Its activity is inhibited by the binding of CbpM. This is Curved DNA-binding protein from Coxiella burnetii (strain Dugway 5J108-111).